Consider the following 626-residue polypeptide: Nuclear RNA export factor 1 (626 aa).

Over residues 1–16 the composition is skewed to basic and acidic residues; it reads MADEGKSYSEHDDERV. The disordered stretch occupies residues 1–85; that stretch reads MADEGKSYSE…TTRPNRRGDA (85 aa). Alanine 2 bears the N-acetylalanine mark. The interval 2–60 is minor non-specific RNA-binding; the sequence is ADEGKSYSEHDDERVNFPQRKKKGRGPFRWKYGEGNRRSGRGGSGIRSSRLEEDDGDVA. The interval 2–118 is RNA-binding (RBD); it reads ADEGKSYSEH…GTSQDGTSKN (117 aa). The interval 2–198 is interaction with ALYREF/THOC4 and LUZP4; sequence ADEGKSYSEH…IIINPSAPPH (197 aa). Phosphoserine is present on serine 9. Basic residues predominate over residues 20–29; it reads QRKKKGRGPF. Arginine 42 carries the asymmetric dimethylarginine; alternate modification. Arginine 42 is subject to Omega-N-methylarginine; alternate. Residues 61–118 are major non-specific RNA-binding; sequence MSDAQDGPRVRYNPYTTRPNRRGDAWHDRDRIHVTVRRDRAPPERGGAGTSQDGTSKN. The tract at residues 61–118 is RNA binding; the sequence is MSDAQDGPRVRYNPYTTRPNRRGDAWHDRDRIHVTVRRDRAPPERGGAGTSQDGTSKN. The short motif at 67–100 is the Nuclear localization signal element; sequence GPRVRYNPYTTRPNRRGDAWHDRDRIHVTVRRDR. The short motif at 83 to 110 is the Nuclear export signal element; that stretch reads GDAWHDRDRIHVTVRRDRAPPERGGAGT. The 80-residue stretch at 119–198 folds into the RRM domain; it reads WFKITIPYGR…IIINPSAPPH (80 aa). Residue tyrosine 126 is modified to 3'-nitrotyrosine. LRR repeat units follow at residues 266-291, 292-315, 316-350, and 351-378; these read ELLS…QKVP, NLKI…IKGL, KLEE…AIRE, and RFPK…TTLP. In terms of domain architecture, NTF2 spans 393–543; that stretch reads LVLHFLQQYY…LCIVNDELFV (151 aa). One can recognise a TAP-C domain in the interval 572–626; that stretch reads PEQQEMLQAFSTQSGMNLEWSQKCLQDNNWDYTRSAQAFTHLKAKGEIPEVAFMK.

Belongs to the NXF family. In terms of assembly, heterodimer (via NTF2 domain) with NXT1. The formation of NXF1-NXT1 heterodimers is required for the NXF1-mediated nuclear mRNA export. Forms a complex with RANBP2/NUP358, NXT1 and RANGAP1. Associates with the exon junction complex (EJC) and with the transcription/export (TREX) complex. Found in a mRNA complex with UPF3A and UPF3B. Found in a post-splicing complex with RBM8A, UPF1, UPF2, UPF3A, UPF3B and RNPS1. Interacts (via N-terminus) with DHX9 (via N-terminus); this interaction is direct and negatively regulates NXF1-mediated nuclear export of constitutive transport element (CTE)-containing cellular mRNAs. Interacts with ALYREF/THOC4. Interacts with FYTTD1/UIF. Interacts with EIF4A3. Interacts with NUPL2. Interacts with THOC5. Interacts with CHTOP. Interacts with FRG1 (via N-terminus). Interacts with LUZP4. Interacts with FMR1; the interaction occurs in a mRNA-dependent and polyribosomes-independent manner in the nucleus. Interacts with CPSF6 (via N-terminus); this interaction is direct. Interacts with RBM15. Interacts with RBM15B. Interacts with MCM3AP; this interaction is not mediated by RNA.

The protein localises to the nucleus. The protein resides in the nucleoplasm. It is found in the nucleus speckle. It localises to the cytoplasm. Functionally, involved in the nuclear export of mRNA species bearing retroviral constitutive transport elements (CTE) and in the export of mRNA from the nucleus to the cytoplasm (TAP/NFX1 pathway). The NXF1-NXT1 heterodimer is involved in the export of HSP70 mRNA in conjunction with ALYREF/THOC4 and THOC5 components of the TREX complex. ALYREF/THOC4-bound mRNA is thought to be transferred to the NXF1-NXT1 heterodimer for export. Also involved in nuclear export of m6A-containing mRNAs: interaction between SRSF3 and YTHDC1 facilitates m6A-containing mRNA-binding to both SRSF3 and NXF1, promoting mRNA nuclear export. The protein is Nuclear RNA export factor 1 (NXF1) of Pongo abelii (Sumatran orangutan).